Here is a 501-residue protein sequence, read N- to C-terminus: UPF0288 protein Maeo_0995 (501 aa).

The protein belongs to the UPF0288 family.

The chain is UPF0288 protein Maeo_0995 from Methanococcus aeolicus (strain ATCC BAA-1280 / DSM 17508 / OCM 812 / Nankai-3).